Reading from the N-terminus, the 346-residue chain is Tyrosine--tRNA ligase (346 aa).

A 'HIGH' region motif is present at residues 47-56 (PSGRIHIAQA). Positions 230–234 (KMSKS) match the 'KMSKS' region motif. ATP is bound at residue Lys-233.

This sequence belongs to the class-I aminoacyl-tRNA synthetase family. As to quaternary structure, homodimer.

It catalyses the reaction tRNA(Tyr) + L-tyrosine + ATP = L-tyrosyl-tRNA(Tyr) + AMP + diphosphate + H(+). In terms of biological role, catalyzes the attachment of tyrosine to tRNA(Tyr) in a two-step reaction: tyrosine is first activated by ATP to form Tyr-AMP and then transferred to the acceptor end of tRNA(Tyr). This Acanthamoeba polyphaga (Amoeba) protein is Tyrosine--tRNA ligase (YARS).